A 437-amino-acid chain; its full sequence is MSVITKIHARQIMDSRGNPTVEVDVYTESSFGRAAVPSGASTGVHEAVELRDNDKSVFLGKGVLKAVENVNTVINSALQGMDVTEQEEIDAKLLELDGTPNKSVLGANAILGVSLACAKAGAEYSALPLYRYIGGTTAKTLPVPMMNVLNGGAHADNTVDFQEFMIMPIGFERYSDALRCGAEVFHSLKALLHKRGLSTAVGDEGGFAPNVESNEQAIELVIEAIGLAGYKAGAPTDKGGLGDGHVMIALDPASSEFYDTEKKKYVFKKSSGRELSSEEMASYWADWASRYPIISIEDGMAEDDWEGWKLLTEKIGDRVQLVGDDLFVTNSKRLGEGIEKGVGNSILIKVNQIGTLTETLQAIDLAKRNGYTSVISHRSGETEDTTIAQIAVATNAGQIKTGSMSRSDRMAKYNELLRIEEMLGDTAVYPGIKAFRV.

Gln162 contributes to the (2R)-2-phosphoglycerate binding site. The active-site Proton donor is Glu204. The Mg(2+) site is built by Asp251, Glu297, and Asp324. The (2R)-2-phosphoglycerate site is built by Lys349, Arg378, Ser379, and Lys400. Lys349 acts as the Proton acceptor in catalysis.

The protein belongs to the enolase family. It depends on Mg(2+) as a cofactor.

Its subcellular location is the cytoplasm. It localises to the secreted. The protein resides in the cell surface. It carries out the reaction (2R)-2-phosphoglycerate = phosphoenolpyruvate + H2O. It functions in the pathway carbohydrate degradation; glycolysis; pyruvate from D-glyceraldehyde 3-phosphate: step 4/5. Catalyzes the reversible conversion of 2-phosphoglycerate (2-PG) into phosphoenolpyruvate (PEP). It is essential for the degradation of carbohydrates via glycolysis. This is Enolase from Chlorobaculum parvum (strain DSM 263 / NCIMB 8327) (Chlorobium vibrioforme subsp. thiosulfatophilum).